Here is a 173-residue protein sequence, read N- to C-terminus: ATP synthase subunit b (173 aa).

Residues 25-45 (LINLVIVIGVLYWFLKGFLGG) form a helical membrane-spanning segment.

This sequence belongs to the ATPase B chain family. In terms of assembly, F-type ATPases have 2 components, F(1) - the catalytic core - and F(0) - the membrane proton channel. F(1) has five subunits: alpha(3), beta(3), gamma(1), delta(1), epsilon(1). F(0) has four main subunits: a(1), b(1), b'(1) and c(10-14). The alpha and beta chains form an alternating ring which encloses part of the gamma chain. F(1) is attached to F(0) by a central stalk formed by the gamma and epsilon chains, while a peripheral stalk is formed by the delta, b and b' chains.

The protein localises to the cellular thylakoid membrane. Functionally, f(1)F(0) ATP synthase produces ATP from ADP in the presence of a proton or sodium gradient. F-type ATPases consist of two structural domains, F(1) containing the extramembraneous catalytic core and F(0) containing the membrane proton channel, linked together by a central stalk and a peripheral stalk. During catalysis, ATP synthesis in the catalytic domain of F(1) is coupled via a rotary mechanism of the central stalk subunits to proton translocation. Its function is as follows. Component of the F(0) channel, it forms part of the peripheral stalk, linking F(1) to F(0). This Synechococcus sp. (strain CC9311) protein is ATP synthase subunit b.